Here is a 690-residue protein sequence, read N- to C-terminus: Protein MODIFIED TRANSPORT TO THE VACUOLE 1 (690 aa).

One can recognise a VHS domain in the interval 20–150 (VTSDEDKVAP…PESINRRIEG (131 aa)). Disordered stretches follow at residues 228 to 258 (DGNY…SVRV) and 518 to 551 (FSID…HQAP). Low complexity predominate over residues 243–257 (GHASGEASESSASVR). Residues 520–536 (IDENNSNQKGSSSSTLP) show a composition bias toward polar residues.

Binds to clathrin heavy chain. In terms of tissue distribution, expressed in inflorescence stems, stigmas, roots, roots meristems, embryos, and floral and leaf vasculatures, but absent from the floral abscission zone.

It localises to the golgi apparatus. The protein localises to the trans-Golgi network. The protein resides in the cytoplasmic vesicle. Its subcellular location is the clathrin-coated vesicle. Functionally, mediates clathrin-dependent trafficking of vacuolar cargo from the trans-Golgi network (TGN). Promotes plant growth. This Arabidopsis thaliana (Mouse-ear cress) protein is Protein MODIFIED TRANSPORT TO THE VACUOLE 1.